Consider the following 138-residue polypeptide: Basic phospholipase A2 PL-X' (138 aa).

The N-terminal stretch at 1–16 (MRTLWIMAVLLVGVEG) is a signal peptide. Disulfide bonds link cysteine 42/cysteine 131, cysteine 44/cysteine 60, cysteine 59/cysteine 111, cysteine 65/cysteine 138, cysteine 66/cysteine 104, cysteine 73/cysteine 97, and cysteine 91/cysteine 102. Ca(2+)-binding residues include tyrosine 43, glycine 45, and glycine 47. The active site involves histidine 63. Aspartate 64 is a binding site for Ca(2+). Aspartate 105 is a catalytic residue.

It belongs to the phospholipase A2 family. Group II subfamily. D49 sub-subfamily. Requires Ca(2+) as cofactor. As to expression, expressed by the venom gland.

The protein localises to the secreted. The catalysed reaction is a 1,2-diacyl-sn-glycero-3-phosphocholine + H2O = a 1-acyl-sn-glycero-3-phosphocholine + a fatty acid + H(+). Functionally, PLA2 catalyzes the calcium-dependent hydrolysis of the 2-acyl groups in 3-sn-phosphoglycerides. In Protobothrops flavoviridis (Habu), this protein is Basic phospholipase A2 PL-X'.